The following is a 403-amino-acid chain: Solanesyl-diphosphate synthase 2, chloroplastic (403 aa).

The N-terminal 62 residues, 1–62 (MLSVSCPRVY…QPGLAAVDVP (62 aa)), are a transit peptide targeting the chloroplast. Isopentenyl diphosphate is bound by residues Lys-123, Arg-126, and His-161. Residues Asp-168 and Asp-172 each coordinate Mg(2+). An all-trans-polyprenyl diphosphate is bound at residue Arg-177. Arg-178 serves as a coordination point for isopentenyl diphosphate. An all-trans-polyprenyl diphosphate contacts are provided by Lys-254, Thr-255, Gln-292, and Lys-309.

This sequence belongs to the FPP/GGPP synthase family. As to quaternary structure, homodimer. Interacts with FBN5. The cofactor is Mg(2+). Expressed in leaves, stems and roots. Highest expression in leaves and roots.

The protein resides in the plastid. Its subcellular location is the chloroplast. It catalyses the reaction 7 isopentenyl diphosphate + (2E)-geranyl diphosphate = all-trans-nonaprenyl diphosphate + 7 diphosphate. Functionally, involved in providing solanesyl diphosphate for plastoquinone-9 (PQ-9) formation. Geranyl diphosphate is the preferred substrate. This is Solanesyl-diphosphate synthase 2, chloroplastic from Oryza sativa subsp. japonica (Rice).